The chain runs to 402 residues: Succinyl-diaminopimelate desuccinylase (402 aa).

Zn(2+) is bound at residue H88. D90 is an active-site residue. D121 is a binding site for Zn(2+). Residue E155 is the Proton acceptor of the active site. Zn(2+)-binding residues include E156, E184, and H374.

Belongs to the peptidase M20A family. DapE subfamily. In terms of assembly, homodimer. Requires Zn(2+) as cofactor. It depends on Co(2+) as a cofactor.

It carries out the reaction N-succinyl-(2S,6S)-2,6-diaminopimelate + H2O = (2S,6S)-2,6-diaminopimelate + succinate. It functions in the pathway amino-acid biosynthesis; L-lysine biosynthesis via DAP pathway; LL-2,6-diaminopimelate from (S)-tetrahydrodipicolinate (succinylase route): step 3/3. Functionally, catalyzes the hydrolysis of N-succinyl-L,L-diaminopimelic acid (SDAP), forming succinate and LL-2,6-diaminopimelate (DAP), an intermediate involved in the bacterial biosynthesis of lysine and meso-diaminopimelic acid, an essential component of bacterial cell walls. In Psychrobacter sp. (strain PRwf-1), this protein is Succinyl-diaminopimelate desuccinylase.